Reading from the N-terminus, the 248-residue chain is Adenylate kinase (248 aa).

Residue 37 to 42 (GAGKGT) participates in ATP binding. An NMP region spans residues 57–86 (SPGNLLREEMNRNSPITAQIKDYVSKGQLV). Residues Arg63, 84–86 (QLV), 111–114 (GFPR), and Gln118 each bind AMP. The interval 149–181 (GRRFDPITGNTYHIIYDPPPPDIADRVVVRTDD) is LID. Arg150 is an ATP binding site. AMP contacts are provided by Arg178 and Arg189.

This sequence belongs to the adenylate kinase family. In terms of assembly, monomer.

The protein localises to the cytoplasm. The catalysed reaction is AMP + ATP = 2 ADP. In terms of biological role, catalyzes the reversible transfer of the terminal phosphate group between ATP and AMP. Plays an important role in cellular energy homeostasis and in adenine nucleotide metabolism. The chain is Adenylate kinase from Giardia intestinalis (Giardia lamblia).